Consider the following 335-residue polypeptide: Holliday junction branch migration complex subunit RuvB (335 aa).

The tract at residues 4–184 (VDRIVSANAK…FGIVQRLEFY (181 aa)) is large ATPase domain (RuvB-L). ATP contacts are provided by residues isoleucine 23, arginine 24, glycine 65, lysine 68, threonine 69, threonine 70, 131–133 (EDY), arginine 174, tyrosine 184, and arginine 221. A Mg(2+)-binding site is contributed by threonine 69. Residues 185–255 (SVEDLASIVT…IAQEALKMLD (71 aa)) are small ATPAse domain (RuvB-S). A head domain (RuvB-H) region spans residues 258-335 (LAGFDFMDRK…RHFGLEQIEK (78 aa)). DNA is bound by residues arginine 294, arginine 313, and arginine 318.

This sequence belongs to the RuvB family. As to quaternary structure, homohexamer. Forms an RuvA(8)-RuvB(12)-Holliday junction (HJ) complex. HJ DNA is sandwiched between 2 RuvA tetramers; dsDNA enters through RuvA and exits via RuvB. An RuvB hexamer assembles on each DNA strand where it exits the tetramer. Each RuvB hexamer is contacted by two RuvA subunits (via domain III) on 2 adjacent RuvB subunits; this complex drives branch migration. In the full resolvosome a probable DNA-RuvA(4)-RuvB(12)-RuvC(2) complex forms which resolves the HJ.

The protein localises to the cytoplasm. It carries out the reaction ATP + H2O = ADP + phosphate + H(+). The RuvA-RuvB-RuvC complex processes Holliday junction (HJ) DNA during genetic recombination and DNA repair, while the RuvA-RuvB complex plays an important role in the rescue of blocked DNA replication forks via replication fork reversal (RFR). RuvA specifically binds to HJ cruciform DNA, conferring on it an open structure. The RuvB hexamer acts as an ATP-dependent pump, pulling dsDNA into and through the RuvAB complex. RuvB forms 2 homohexamers on either side of HJ DNA bound by 1 or 2 RuvA tetramers; 4 subunits per hexamer contact DNA at a time. Coordinated motions by a converter formed by DNA-disengaged RuvB subunits stimulates ATP hydrolysis and nucleotide exchange. Immobilization of the converter enables RuvB to convert the ATP-contained energy into a lever motion, pulling 2 nucleotides of DNA out of the RuvA tetramer per ATP hydrolyzed, thus driving DNA branch migration. The RuvB motors rotate together with the DNA substrate, which together with the progressing nucleotide cycle form the mechanistic basis for DNA recombination by continuous HJ branch migration. Branch migration allows RuvC to scan DNA until it finds its consensus sequence, where it cleaves and resolves cruciform DNA. The protein is Holliday junction branch migration complex subunit RuvB of Histophilus somni (strain 129Pt) (Haemophilus somnus).